Reading from the N-terminus, the 525-residue chain is GMP synthase [glutamine-hydrolyzing] (525 aa).

Residues 9-207 (RILILDFGSQ…VRDICQCEAL (199 aa)) form the Glutamine amidotransferase type-1 domain. The active-site Nucleophile is Cys-86. Active-site residues include His-181 and Glu-183. Residues 208-400 (WTPAKIIDDA…LGLPYDMLYR (193 aa)) enclose the GMPS ATP-PPase domain. Residue 235–241 (SGGVDSS) participates in ATP binding.

As to quaternary structure, homodimer.

The catalysed reaction is XMP + L-glutamine + ATP + H2O = GMP + L-glutamate + AMP + diphosphate + 2 H(+). It functions in the pathway purine metabolism; GMP biosynthesis; GMP from XMP (L-Gln route): step 1/1. In terms of biological role, catalyzes the synthesis of GMP from XMP. The polypeptide is GMP synthase [glutamine-hydrolyzing] (Shigella dysenteriae serotype 1 (strain Sd197)).